Reading from the N-terminus, the 175-residue chain is Translation initiation factor IF-3 (175 aa).

The protein belongs to the IF-3 family. Monomer.

The protein resides in the cytoplasm. Its function is as follows. IF-3 binds to the 30S ribosomal subunit and shifts the equilibrium between 70S ribosomes and their 50S and 30S subunits in favor of the free subunits, thus enhancing the availability of 30S subunits on which protein synthesis initiation begins. This chain is Translation initiation factor IF-3, found in Staphylococcus saprophyticus subsp. saprophyticus (strain ATCC 15305 / DSM 20229 / NCIMB 8711 / NCTC 7292 / S-41).